We begin with the raw amino-acid sequence, 171 residues long: UPF0398 protein stu0232 (171 aa).

The protein belongs to the UPF0398 family.

The chain is UPF0398 protein stu0232 from Streptococcus thermophilus (strain ATCC BAA-250 / LMG 18311).